Here is a 170-residue protein sequence, read N- to C-terminus: Heat shock protein beta-7 (170 aa).

Positions 1-39 (MSHRTSSTFRAERSFHSSSSSSSSSTSSSASRALPAQDP) are disordered. The segment at 1-71 (MSHRTSSTFR…PLAFPARPGG (71 aa)) is required for localization to SC35 splicing speckles. A compositionally biased stretch (low complexity) spans 16 to 31 (HSSSSSSSSSTSSSAS). A sHSP domain is found at 62–170 (PLAFPARPGG…QQTFRTEIKI (109 aa)).

The protein belongs to the small heat shock protein (HSP20) family. As to quaternary structure, interacts with C-terminal domain of actin-binding protein 280. Isoform 1 is highly expressed in adult and fetal heart, skeletal muscle, and at a much lower levels in adipose tissue and in aorta. Undetectable in other tissues. Isoform 2 and isoform 3 are poorly detected in heart.

The protein resides in the cytoplasm. The protein localises to the nucleus. Its subcellular location is the cajal body. The protein is Heat shock protein beta-7 (HSPB7) of Homo sapiens (Human).